A 748-amino-acid polypeptide reads, in one-letter code: Structure-specific endonuclease subunit SLX4 (748 aa).

Positions 50–102 (LSSDDDSISTQVKSVTAQKSPITQETTKNDTERNKDVDKSCNPVSTSQPDLGE) are disordered. A compositionally biased stretch (polar residues) spans 57–75 (ISTQVKSVTAQKSPITQET). Thr-72 bears the Phosphothreonine; by ATR and ATM mark. The span at 76 to 88 (TKNDTERNKDVDK) shows a compositional bias: basic and acidic residues. Phosphothreonine; by ATR and ATM is present on Thr-113. Disordered regions lie at residues 215 to 236 (IKTQ…KGEK) and 277 to 303 (EKSS…PPEL). The segment covering 222–236 (NSDKPPRARNNKGEK) has biased composition (basic and acidic residues). A compositionally biased stretch (low complexity) spans 277-291 (EKSSSSLDNQESSQQ). Residue Ser-289 is modified to Phosphoserine; by ATR and ATM. Thr-319 is subject to Phosphothreonine; by ATR and ATM. Phosphoserine; by ATR and ATM is present on residues Ser-329 and Ser-355.

It belongs to the SLX4 family. As to quaternary structure, forms a heterodimer with SLX1. Interacts with RAD1; catalytic subunit of the RAD1-RAD10 endonuclease. Interacts with RTT107. In terms of processing, phosphorylated by ATR (MEC1) and ATM (TEL1) upon DNA damage. This appears to be required for the function with the RAD1-RAD10 endonuclease.

The protein localises to the nucleus. It localises to the cytoplasm. In terms of biological role, regulatory subunit that interacts with and increases the activity of different structure-specific endonucleases. Has several distinct roles in protecting genome stability by resolving diverse forms of deleterious DNA structures. Component of the SLX1-SLX4 structure-specific endonuclease that resolves DNA secondary structures generated during DNA repair and recombination. Has endonuclease activity towards branched DNA substrates, introducing single-strand cuts in duplex DNA close to junctions with ss-DNA. Has a preference for simple Y, 5'-flap and replication fork-like structures. It cleaves the strand bearing the 5'-non-homologous arm at the branch site junction and generates ligatable, nicked products from the 5'-flap or replication fork substrates. Plays a critical role in maintaining the integrity of the ribosomal DNA (rDNA) loci, where it has a role in re-starting stalled replication forks. Has Holliday junction resolvase activity in vitro. Interacts with the structure-specific RAD1-RAD10 endonuclease and promotes RAD1-RAD10-dependent 3'-non-homologous tail removal (NHTR) during repair of double-strand breaks by single-strand annealing. SLX4 also promotes recovery from DNA-alkylation-induced replisome stalling during DNA replication by facilitating the error-free mode of lesion bypass. This does not require SLX1 or RAD1-RAD10, but probably RTT107. This Saccharomyces cerevisiae (strain YJM789) (Baker's yeast) protein is Structure-specific endonuclease subunit SLX4.